The chain runs to 215 residues: Cytochrome b6 (215 aa).

A helical transmembrane segment spans residues 32 to 52 (IFYCLGGIVFVSFLIQVATGF). Residue Cys35 coordinates heme c. Heme b is bound by residues His86 and His100. 3 helical membrane passes run 90-110 (ASMMVLMMILHVFRVYLTGGF), 116-136 (LTWVTGVILGVLTVSFGVTGY), and 186-206 (LHTFVLPLLTAVFMLMHFLMI). The heme b site is built by His187 and His202.

Belongs to the cytochrome b family. PetB subfamily. As to quaternary structure, the 4 large subunits of the cytochrome b6-f complex are cytochrome b6, subunit IV (17 kDa polypeptide, PetD), cytochrome f and the Rieske protein, while the 4 small subunits are PetG, PetL, PetM and PetN. The complex functions as a dimer. The cofactor is heme b. It depends on heme c as a cofactor.

It localises to the plastid. The protein localises to the chloroplast thylakoid membrane. Its function is as follows. Component of the cytochrome b6-f complex, which mediates electron transfer between photosystem II (PSII) and photosystem I (PSI), cyclic electron flow around PSI, and state transitions. In Porphyra purpurea (Red seaweed), this protein is Cytochrome b6.